The following is a 59-amino-acid chain: Ferredoxin (59 aa).

The region spanning 2-29 (KVSVDKDACIGCGVCASICPDVFEMDDD) is the 4Fe-4S ferredoxin-type domain. 3 residues coordinate [4Fe-4S] cluster: Cys10, Cys13, and Cys16. An intrachain disulfide couples Cys20 to Cys43. Residue Cys51 coordinates [4Fe-4S] cluster.

Requires [4Fe-4S] cluster as cofactor. It depends on [3Fe-4S] cluster as a cofactor.

Functionally, ferredoxins are iron-sulfur proteins that transfer electrons in a wide variety of metabolic reactions. The protein is Ferredoxin of Thermococcus litoralis.